A 525-amino-acid chain; its full sequence is GMP synthase [glutamine-hydrolyzing] (525 aa).

The Glutamine amidotransferase type-1 domain occupies 9–207 (RILILDFGSQ…VLDICGCEAL (199 aa)). Cys86 acts as the Nucleophile in catalysis. Active-site residues include His181 and Glu183. Residues 208–400 (WTPSKIAEDA…LGLPYDMVYR (193 aa)) enclose the GMPS ATP-PPase domain. 235-241 (SGGVDSS) is an ATP binding site.

As to quaternary structure, homodimer.

It carries out the reaction XMP + L-glutamine + ATP + H2O = GMP + L-glutamate + AMP + diphosphate + 2 H(+). It participates in purine metabolism; GMP biosynthesis; GMP from XMP (L-Gln route): step 1/1. Functionally, catalyzes the synthesis of GMP from XMP. This Pseudomonas fluorescens (strain Pf0-1) protein is GMP synthase [glutamine-hydrolyzing].